A 3295-amino-acid chain; its full sequence is Toxin CdiA (3295 aa).

Positions 33 to 366 are two-partner system transport domain (TPS); it reads PSSGVGHTQR…GKGNTQLTTA (334 aa). Residues 55–75 traverse the membrane as a helical segment; the sequence is LLIALGCISLSAQAAIVADGS. The tract at residues 353–1574 is FHA-1; sequence GVLYGKGNTQ…LLVYAKTLTN (1222 aa). Positions 1165–1185 are disordered; sequence PPSSIPPSSTQSSSTQASASP. Residues 1575–1796 form a receptor binding domain (RBD) region; sequence RRQILTATTD…LKTDKGDYAP (222 aa). A YP domain region spans residues 1797 to 1977; it reads GPEAALSLAN…GVKPGDLRAN (181 aa). The interval 1806 to 1831 is disordered; the sequence is NISPPSSLDATGPRGVPPPSDDLNRT. Residues 1998 to 2035 are periplasmic FHA-1 repeat (pFR); that stretch reads GAISASNNLQISMAKDITLNNRCGLLQAGNHLQLSTLN. An FHA-2 region spans residues 2022 to 2676; the sequence is LLQAGNHLQL…DRDNYDAKQS (655 aa). Disordered regions lie at residues 2260–2292 and 2823–2847; these read TSQT…EGRS and QQNV…FDKE. Polar residues predominate over residues 2823–2838; it reads QQNVDDLSRDTGNANG. Positions 3073–3076 match the VENN CT cleavage motif motif; it reads VENN. Positions 3073–3295 are CT domain; the sequence is VENNLLGGNE…QKKDAMEDSK (223 aa). Positions 3276–3295 are disordered; it reads SSEFGSSLIQQKKDAMEDSK. Positions 3286–3295 are enriched in basic and acidic residues; that stretch reads QKKDAMEDSK.

In the N-terminal section; belongs to the CdiA toxin family. In terms of assembly, probably interacts with cognate immunity protein CdiI.

The protein localises to the membrane. The protein resides in the target cell. Its subcellular location is the target cell cytoplasm. In terms of biological role, toxic component of a toxin-immunity protein module, which functions as a cellular contact-dependent growth inhibition (CDI) system. CDI modules allow bacteria to communicate with and inhibit the growth of closely related neighboring bacteria in a contact-dependent fashion. CDI is neutralized by its cognate immunity protein CdiI, but not by non-cognate CdiI from other bacteria. Functionally, the CdiA protein is thought to be exported from the cell through the central lumen of CdiB, the other half of its two-partner system (TPS). The TPS domain probably remains associated with CdiB while the FHA-1 domain forms an extended filament with the receptor-binding domain (RBD) at its extremity; in the secretion arrested state the C-terminus of the RBD and YP domains form a hairpin-like structure as the FHA-2, PT and CT domains are periplasmic. The YP domain is probably responsible for this arrest at the point where it re-enters the host cell periplasm. Upon binding to a target cell outer membrane receptor a signal is transmitted to activate secretion. The filament elongates slightly, the rest of CdiA is secreted and the FHA-2 domain becomes stably associated with the target cell's outer membrane where it facilitates entry of the toxic CT domain into the target cell periplasm. From there the toxic CT domain is cleaved and gains access to the target cell cytoplasm via an inner membrane protein. This chain is Toxin CdiA, found in Yersinia pestis.